Reading from the N-terminus, the 356-residue chain is 16-methoxy-2,3-dihydro-3-hydroxytabersonine synthase (356 aa).

7 residues coordinate Zn(2+): Cys49, His71, Cys102, Cys105, Cys108, Cys116, and Cys162. Residue 187–192 coordinates NAD(+); that stretch reads GLGAVG.

The protein belongs to the zinc-containing alcohol dehydrogenase family. It depends on Zn(2+) as a cofactor. As to expression, expressed in leaf epidermis.

It carries out the reaction (3R)-3-hydroxy-16-methoxy-2,3-dihydrotabersonine + A = (3R)-1,2-didehydro-3-hydroxy-16-methoxy-2,3-dihydrotabersonine + AH2. The catalysed reaction is (3R)-3-hydroxy-2,3-dihydrotabersonine + A = (3R)-1,2-didehydro-3-hydroxy-2,3-dihydrotabersonine + AH2. It participates in alkaloid biosynthesis; vindoline biosynthesis. In terms of biological role, converts the unstable imine alcohols produced by CYP71D1V2/T3O into 3-hydroxy-16-methoxy-2,3-dihydrotabersonine or 3-hydroxy-2,3-dihydrotabersonine. This is 16-methoxy-2,3-dihydro-3-hydroxytabersonine synthase from Catharanthus roseus (Madagascar periwinkle).